Consider the following 447-residue polypeptide: Signal recognition particle 54 kDa protein (447 aa).

GTP is bound by residues 105-112 (GVQGSGKT), 187-191 (DTAGR), and 247-250 (TKMD).

The protein belongs to the GTP-binding SRP family. SRP54 subfamily. In terms of assembly, part of the signal recognition particle protein translocation system, which is composed of SRP and FtsY. Archaeal SRP consists of a 7S RNA molecule of 300 nucleotides and two protein subunits: SRP54 and SRP19.

Its subcellular location is the cytoplasm. The enzyme catalyses GTP + H2O = GDP + phosphate + H(+). Its function is as follows. Involved in targeting and insertion of nascent membrane proteins into the cytoplasmic membrane. Binds to the hydrophobic signal sequence of the ribosome-nascent chain (RNC) as it emerges from the ribosomes. The SRP-RNC complex is then targeted to the cytoplasmic membrane where it interacts with the SRP receptor FtsY. This Hyperthermus butylicus (strain DSM 5456 / JCM 9403 / PLM1-5) protein is Signal recognition particle 54 kDa protein.